A 107-amino-acid polypeptide reads, in one-letter code: uncharacterized protein (107 aa).

The interval 87 to 107 is disordered; it reads KNRNGPKAEKRRPYVRAHAKW.

This is an uncharacterized protein from Saccharomyces cerevisiae (strain ATCC 204508 / S288c) (Baker's yeast).